A 199-amino-acid polypeptide reads, in one-letter code: Securin (199 aa).

Disordered stretches follow at residues 1–23 and 58–108; these read MATLIFVDKDNEEPGSRLASKDG and RKAL…DDAY. Ala-2 carries the post-translational modification N-acetylalanine. The segment covering 7 to 23 has biased composition (basic and acidic residues); that stretch reads VDKDNEEPGSRLASKDG. The short motif at 58–61 is the D-box element; that stretch reads RKAL. The TEK-box 1 signature appears at 68–70; the sequence is TEK. Residues 76–85 show a composition bias toward polar residues; the sequence is KPLQSKQPTL. Positions 91–93 match the TEK-box 2 motif; it reads TEK. Position 162 is a phosphoserine (Ser-162). The SH3-binding motif lies at 179–192; it reads PPSALSALDVELPP.

The protein belongs to the securin family. As to quaternary structure, interacts with the caspase-like ESPL1, and prevents its protease activity by covering its active site. Interacts with p53/TP53 and blocks its activity probably by blocking its binding to DNA. Interacts with the Ku 70 kDa subunit of ds-DNA kinase. Interacts with PTTG1IP. Interacts with RPS10 and DNAJA1. Post-translationally, phosphorylated at Ser-162 by CDK1 during mitosis. In terms of processing, phosphorylated in vitro by ds-DNA kinase. Ubiquitinated through 'Lys-11' linkage of ubiquitin moieties by the anaphase promoting complex (APC) at the onset of anaphase, conducting to its degradation. 'Lys-11'-linked ubiquitination is mediated by the E2 ligase UBE2C/UBCH10. Expressed at low level in most tissues, except in adult testis, where it is highly expressed. Expressed in both spermatocytes and spermatids.

Its subcellular location is the cytoplasm. The protein localises to the nucleus. Its function is as follows. Regulatory protein, which plays a central role in chromosome stability, in the p53/TP53 pathway, and DNA repair. Probably acts by blocking the action of key proteins. During the mitosis, it blocks Separase/ESPL1 function, preventing the proteolysis of the cohesin complex and the subsequent segregation of the chromosomes. At the onset of anaphase, it is ubiquitinated, conducting to its destruction and to the liberation of ESPL1. Its function is however not limited to a blocking activity, since it is required to activate ESPL1. Negatively regulates the transcriptional activity and related apoptosis activity of p53/TP53. The negative regulation of p53/TP53 may explain the strong transforming capability of the protein when it is overexpressed. May also play a role in DNA repair via its interaction with Ku, possibly by connecting DNA damage-response pathways with sister chromatid separation. This chain is Securin (Pttg1), found in Rattus norvegicus (Rat).